We begin with the raw amino-acid sequence, 185 residues long: Ribosome-recycling factor (185 aa).

This sequence belongs to the RRF family.

It is found in the cytoplasm. Its function is as follows. Responsible for the release of ribosomes from messenger RNA at the termination of protein biosynthesis. May increase the efficiency of translation by recycling ribosomes from one round of translation to another. The chain is Ribosome-recycling factor from Pectobacterium atrosepticum (strain SCRI 1043 / ATCC BAA-672) (Erwinia carotovora subsp. atroseptica).